A 587-amino-acid chain; its full sequence is 2-succinyl-5-enolpyruvyl-6-hydroxy-3-cyclohexene-1-carboxylate synthase (587 aa).

The protein belongs to the TPP enzyme family. MenD subfamily. Homodimer. Requires Mg(2+) as cofactor. Mn(2+) is required as a cofactor. The cofactor is thiamine diphosphate.

It catalyses the reaction isochorismate + 2-oxoglutarate + H(+) = 5-enolpyruvoyl-6-hydroxy-2-succinyl-cyclohex-3-ene-1-carboxylate + CO2. It functions in the pathway quinol/quinone metabolism; 1,4-dihydroxy-2-naphthoate biosynthesis; 1,4-dihydroxy-2-naphthoate from chorismate: step 2/7. It participates in cofactor biosynthesis; phylloquinone biosynthesis. In terms of biological role, catalyzes the thiamine diphosphate-dependent decarboxylation of 2-oxoglutarate and the subsequent addition of the resulting succinic semialdehyde-thiamine pyrophosphate anion to isochorismate to yield 2-succinyl-5-enolpyruvyl-6-hydroxy-3-cyclohexene-1-carboxylate (SEPHCHC). This Prochlorococcus marinus (strain MIT 9312) protein is 2-succinyl-5-enolpyruvyl-6-hydroxy-3-cyclohexene-1-carboxylate synthase.